The chain runs to 1682 residues: 1-phosphatidylinositol 4,5-bisphosphate phosphodiesterase eta-1 (1682 aa).

Residues 20–128 form the PH domain; the sequence is SVMQSGTQMI…WITGLKYLMA (109 aa). EF-hand domains follow at residues 142 to 177, 178 to 214, and 226 to 246; these read THDQ…LNVN, LPRR…MSLR, and DKKD…EQKM. 4 residues coordinate Ca(2+): aspartate 155, asparagine 157, aspartate 159, and glutamate 166. One can recognise a PI-PLC X-box domain in the interval 299–444; it reads QDMDQPLCNY…LKGKILVKGK (146 aa). The active site involves histidine 314. Asparagine 315, glutamate 344, and aspartate 346 together coordinate Ca(2+). Histidine 358 is a catalytic residue. Glutamate 393 contributes to the Ca(2+) binding site. 2 residues coordinate substrate: lysine 442 and lysine 444. The disordered stretch occupies residues 534 to 588; the sequence is LDVKESGKKSHGRSLMANFGKHKQKATKSRSKSYSTDDEDDSLQNPGKEGGQLYR. Residues 553 to 564 show a composition bias toward basic residues; the sequence is GKHKQKATKSRS. The region spanning 602-715 is the PI-PLC Y-box domain; that stretch reads LSDLVVYTNS…GYILKPQQMC (114 aa). Substrate is bound by residues serine 628 and arginine 655. Positions 716 to 844 constitute a C2 domain; that stretch reads KGTFNPFSGD…PGYRHVYLEG (129 aa). Ca(2+) is bound by residues isoleucine 759, aspartate 761, aspartate 785, aspartate 814, histidine 815, and aspartate 816. Residues 992 to 1018 show a composition bias toward basic and acidic residues; the sequence is DTDGKENCLAGDKDDRRKGAATRKDPH. 3 disordered regions span residues 992–1083, 1296–1321, and 1581–1603; these read DTDG…LSPR, NLPG…HSQV, and RAKE…GGVV. Residues 1019–1033 are compositionally biased toward low complexity; it reads FSNFNKKLSSSSSAL. Composition is skewed to polar residues over residues 1040–1050 and 1065–1074; these read QGPTASVSNPE and NMTNDCQENH. Over residues 1581–1590 the composition is skewed to basic and acidic residues; the sequence is RAKEKQEAGK.

The cofactor is Ca(2+). Expressed in brain and to a lower extent in lung. In brain, it is found in cerebrum, cerebellum and spinal cord.

The protein resides in the cytoplasm. The protein localises to the membrane. The enzyme catalyses a 1,2-diacyl-sn-glycero-3-phospho-(1D-myo-inositol-4,5-bisphosphate) + H2O = 1D-myo-inositol 1,4,5-trisphosphate + a 1,2-diacyl-sn-glycerol + H(+). The production of the second messenger molecules diacylglycerol (DAG) and inositol 1,4,5-trisphosphate (IP3) is mediated by calcium-activated phosphatidylinositol-specific phospholipase C enzymes. In Mus musculus (Mouse), this protein is 1-phosphatidylinositol 4,5-bisphosphate phosphodiesterase eta-1.